A 308-amino-acid chain; its full sequence is Porphobilinogen deaminase (308 aa).

At C243 the chain carries S-(dipyrrolylmethanemethyl)cysteine.

The protein belongs to the HMBS family. In terms of assembly, monomer. The cofactor is dipyrromethane.

The enzyme catalyses 4 porphobilinogen + H2O = hydroxymethylbilane + 4 NH4(+). The protein operates within porphyrin-containing compound metabolism; protoporphyrin-IX biosynthesis; coproporphyrinogen-III from 5-aminolevulinate: step 2/4. In terms of biological role, tetrapolymerization of the monopyrrole PBG into the hydroxymethylbilane pre-uroporphyrinogen in several discrete steps. The polypeptide is Porphobilinogen deaminase (Nitrosomonas europaea (strain ATCC 19718 / CIP 103999 / KCTC 2705 / NBRC 14298)).